We begin with the raw amino-acid sequence, 307 residues long: Oxygen-dependent coproporphyrinogen-III oxidase (307 aa).

Substrate is bound at residue Ser-99. Residues His-103 and His-113 each contribute to the a divalent metal cation site. The active-site Proton donor is the His-113. 115-117 lines the substrate pocket; it reads NVR. 2 residues coordinate a divalent metal cation: His-152 and His-182. The segment at 247–282 is important for dimerization; sequence YVEFNLVFDRGTLFGLQSGGRTESILMSMPPVVNWR. 265-267 is a binding site for substrate; the sequence is GGR.

The protein belongs to the aerobic coproporphyrinogen-III oxidase family. Homodimer. It depends on a divalent metal cation as a cofactor.

Its subcellular location is the cytoplasm. The enzyme catalyses coproporphyrinogen III + O2 + 2 H(+) = protoporphyrinogen IX + 2 CO2 + 2 H2O. It functions in the pathway porphyrin-containing compound metabolism; protoporphyrin-IX biosynthesis; protoporphyrinogen-IX from coproporphyrinogen-III (O2 route): step 1/1. Functionally, involved in the heme biosynthesis. Catalyzes the aerobic oxidative decarboxylation of propionate groups of rings A and B of coproporphyrinogen-III to yield the vinyl groups in protoporphyrinogen-IX. This Paraburkholderia xenovorans (strain LB400) protein is Oxygen-dependent coproporphyrinogen-III oxidase.